A 122-amino-acid chain; its full sequence is Acidic phospholipase A2 2 (122 aa).

Intrachain disulfides connect Cys-26-Cys-115, Cys-28-Cys-44, Cys-43-Cys-95, Cys-49-Cys-122, Cys-50-Cys-88, Cys-57-Cys-81, and Cys-75-Cys-86. 3 residues coordinate Ca(2+): Tyr-27, Gly-29, and Gly-31. Residue His-47 is part of the active site. Asp-48 serves as a coordination point for Ca(2+). Asp-89 is an active-site residue.

This sequence belongs to the phospholipase A2 family. Group II subfamily. D49 sub-subfamily. Requires Ca(2+) as cofactor. Expressed by the venom gland.

Its subcellular location is the secreted. It catalyses the reaction a 1,2-diacyl-sn-glycero-3-phosphocholine + H2O = a 1-acyl-sn-glycero-3-phosphocholine + a fatty acid + H(+). Snake venom phospholipase A2 (PLA2) that has high lipolytic activity. PLA2 catalyzes the calcium-dependent hydrolysis of the 2-acyl groups in 3-sn-phosphoglycerides. This Craspedocephalus gramineus (Bamboo pit viper) protein is Acidic phospholipase A2 2.